Reading from the N-terminus, the 1072-residue chain is LRR receptor-like serine/threonine-protein kinase RGI5 (1072 aa).

Positions 1 to 21 are cleaved as a signal peptide; the sequence is MERERSNFFFLFLFCSWVSMA. Topologically, residues 22 to 706 are extracellular; the sequence is QPTLSLSSDG…NGVKSPKIVA (685 aa). A disulfide bridge connects residues Cys-56 and Cys-63. LRR repeat units lie at residues 66 to 89, 90 to 113, 114 to 138, 140 to 162, 164 to 185, 187 to 211, 212 to 234, 235 to 259, 260 to 283, 285 to 307, 308 to 331, 332 to 355, 356 to 379, 381 to 402, 403 to 427, 429 to 451, 452 to 475, 477 to 499, 500 to 523, 524 to 546, 548 to 571, 572 to 595, 597 to 619, 620 to 642, and 643 to 667; these read DNRV…DLSS, LSSL…SFGK, LTHL…LGRL, TLQF…ISNL, ALQV…SFGS, VSLQ…LGFL, KNLT…TFGN, LVNL…LGLC, SELR…LGKL, KITS…ISNC, SSLV…LGKL, VWLE…LSNC, SSLI…IGNL, SLQS…SFGN, CTDL…LFSL, RLSK…VAKC, QSLV…IGEL, NLVF…ISNI, TVLE…LGNL, VNLE…SFGN, SYLN…IKNL, QKLT…LGQV, SLTI…TFSD, LTQL…VLGS, and LTSL…PFFK. 3 N-linked (GlcNAc...) asparagine glycosylation sites follow: Asn-80, Asn-97, and Asn-102. The short motif at 171–172 is the Small peptide recognition element; that stretch reads QD. Asn-176 is a glycosylation site (N-linked (GlcNAc...) asparagine). The Small peptide recognition signature appears at 193 to 196; the sequence is RLGG. The N-linked (GlcNAc...) asparagine glycan is linked to Asn-213. 3 consecutive short sequence motifs (small peptide recognition) follow at residues 216–221, Tyr-244, and 266–268; these read TLGFAA and YLH. N-linked (GlcNAc...) asparagine glycosylation is present at Asn-306. Short sequence motifs (small peptide recognition) lie at residues 314–317 and 336–338; these read DVSA and QLQ. An N-linked (GlcNAc...) asparagine glycan is attached at Asn-354. Residues 384-388 carry the Small peptide recognition motif; it reads SFFLW. N-linked (GlcNAc...) asparagine glycosylation is present at Asn-402. Short sequence motifs (small peptide recognition) lie at residues 410–413, 432–436, and 456–458; these read DLSR, KLLLL, and RLR. The N-linked (GlcNAc...) asparagine glycan is linked to Asn-498. Asn-546 carries N-linked (GlcNAc...) asparagine glycosylation. N-linked (GlcNAc...) asparagine glycosylation is found at Asn-650 and Asn-655. Residues 707-727 form a helical membrane-spanning segment; it reads LTAVILASITIAILAAWLLIL. Topologically, residues 728-1072 are cytoplasmic; that stretch reads RNNHLYKTSQ…SQPLIKPSSS (345 aa). At Thr-764 the chain carries Phosphothreonine. One can recognise a Protein kinase domain in the interval 772–1067; that stretch reads LTDENVIGKG…EWGKTSQPLI (296 aa). Residues 778 to 786 and Lys-800 each bind ATP; that span reads IGKGCSGIV. A phosphotyrosine mark is found at Tyr-851 and Tyr-887. The active-site Proton acceptor is the Asp-900. Ser-936 bears the Phosphoserine mark. 2 positions are modified to phosphotyrosine: Tyr-944 and Tyr-951. Thr-952 carries the post-translational modification Phosphothreonine.

Belongs to the protein kinase superfamily. Ser/Thr protein kinase family. As to quaternary structure, binds to RGF1; this interaction triggers the formation of heterodimers with SERK1. In terms of processing, phosphorylated and ubiquitinated upon interaction with RGF1, thus leading to activation a subsequent degradation. Post-translationally, autophosphorylated. As to expression, expressed in roots and hypocotyls.

The protein localises to the membrane. It carries out the reaction L-seryl-[protein] + ATP = O-phospho-L-seryl-[protein] + ADP + H(+). The catalysed reaction is L-threonyl-[protein] + ATP = O-phospho-L-threonyl-[protein] + ADP + H(+). Its function is as follows. Together with RGI1, RGI2, RGI3 and RGI4, acts as a receptor of RGF1, a peptide hormone that maintains the postembryonic root stem cell niche by regulating the expression levels and patterns of the transcription factor PLETHORA (PLT). Links RGF1 signal with its downstream components. This chain is LRR receptor-like serine/threonine-protein kinase RGI5, found in Arabidopsis thaliana (Mouse-ear cress).